A 168-amino-acid polypeptide reads, in one-letter code: Photosystem I assembly protein Ycf3 (168 aa).

TPR repeat units follow at residues 35-68, 72-105, and 120-153; these read AFTY…EIDP, SYIL…NPFL, and GEQA…TPGN.

It belongs to the Ycf3 family.

The protein resides in the plastid. Its subcellular location is the chloroplast thylakoid membrane. Essential for the assembly of the photosystem I (PSI) complex. May act as a chaperone-like factor to guide the assembly of the PSI subunits. This is Photosystem I assembly protein Ycf3 from Nicotiana sylvestris (Wood tobacco).